Consider the following 504-residue polypeptide: Dolichol kinase sec59 (504 aa).

At 1–55 the chain is on the cytoplasmic side; that stretch reads MYIMSKKCYDTSEKIDREQECVEVNYQHRNFESILEIFSVLFIPFLCNSGKKFLQ. The chain crosses the membrane as a helical span at residues 56 to 76; it reads ISNASFFLPACFYLLGSSSII. A topological domain (lumenal) is located at residue Gln77. The helical transmembrane segment at 78–98 threads the bilayer; that stretch reads LYEPLLWLSSFPFCILYVGFG. Topologically, residues 99-157 are cytoplasmic; sequence ENSVLYHEMYTVCLYNALLSLTQRWKWLSIVLDGLGNSSVNLKLHETVILAFLEITQNS. A helical membrane pass occupies residues 158-178; that stretch reads FTFIEGILICTGLTGLCFATF. Topologically, residues 179 to 187 are lumenal; sequence SYEVSPVVS. The chain crosses the membrane as a helical span at residues 188–208; the sequence is VLSGVLLISLPTLILLNLCIL. The Cytoplasmic segment spans residues 209 to 215; sequence KLAAKLH. Residues 216-236 traverse the membrane as a helical segment; it reads LSALFTTCLIYFFSALLVFLV. The Lumenal segment spans residues 237–263; that stretch reads SRSWVAGQLGQAPEVWLFNQIFSHRNS. The chain crosses the membrane as a helical span at residues 264 to 284; it reads LTRIKIIIWWIICLGCFIFIL. The Cytoplasmic segment spans residues 285 to 325; that stretch reads LRSNRNNPLGKYFTTEDEVLNFRRKTYHALVVFLFLPVCCL. The helical transmembrane segment at 326-347 threads the bilayer; that stretch reads DPHFLHLSFSGVLFIFLFVEGI. Over 348-373 the chain is Lumenal; sequence RILRLKPFGKMIHEFLWEYTDNRDHK. A helical transmembrane segment spans residues 374–394; it reads GPLIISHIYLLIGCAIPIWLS. Over 395 to 403 the chain is Cytoplasmic; sequence NALKGPVAS. Residues 404-424 traverse the membrane as a helical segment; the sequence is VELLVGVLCLGCGDSMASIIG. Residues 425-440 lie on the Lumenal side of the membrane; that stretch reads KRFGKHRISKTNKSIE. Residues 441 to 461 traverse the membrane as a helical segment; sequence GVFAFSISVFLVLHLTQAFHV. Position 462 (Cys462) is a topological domain, cytoplasmic. Residues 463–483 traverse the membrane as a helical segment; that stretch reads PSVTFWKTLFMSLCTAILEGV. At 484 to 504 the chain is on the lumenal side; it reads STENDNLILPMYMWVLYQALD.

Belongs to the polyprenol kinase family.

The protein localises to the endoplasmic reticulum membrane. The catalysed reaction is a di-trans,poly-cis-dolichol + CTP = a di-trans,poly-cis-dolichyl phosphate + CDP + H(+). It participates in protein modification; protein glycosylation. Catalyzes CTP-mediated phosphorylation of dolichol, the terminal step in de novo dolichyl monophosphate (Dol-P) biosynthesis. Dol-P is a lipid carrier essential for the synthesis of N-linked and O-linked oligosaccharides and for GPI anchors. The protein is Dolichol kinase sec59 of Schizosaccharomyces pombe (strain 972 / ATCC 24843) (Fission yeast).